The following is a 243-amino-acid chain: Small ribosomal subunit protein mS23 (243 aa).

Belongs to the mitochondrion-specific ribosomal protein mS23 family. Component of the mitochondrial small ribosomal subunit.

The protein localises to the mitochondrion. In Emericella nidulans (strain FGSC A4 / ATCC 38163 / CBS 112.46 / NRRL 194 / M139) (Aspergillus nidulans), this protein is Small ribosomal subunit protein mS23 (rsm25).